The sequence spans 389 residues: Lipid-A-disaccharide synthase (389 aa).

It belongs to the LpxB family.

It catalyses the reaction a lipid X + a UDP-2-N,3-O-bis[(3R)-3-hydroxyacyl]-alpha-D-glucosamine = a lipid A disaccharide + UDP + H(+). The protein operates within bacterial outer membrane biogenesis; LPS lipid A biosynthesis. Functionally, condensation of UDP-2,3-diacylglucosamine and 2,3-diacylglucosamine-1-phosphate to form lipid A disaccharide, a precursor of lipid A, a phosphorylated glycolipid that anchors the lipopolysaccharide to the outer membrane of the cell. This chain is Lipid-A-disaccharide synthase, found in Paraburkholderia phytofirmans (strain DSM 17436 / LMG 22146 / PsJN) (Burkholderia phytofirmans).